The sequence spans 479 residues: Adenosylhomocysteinase (479 aa).

T66, D142, and E203 together coordinate substrate. Residue 204-206 (TTT) coordinates NAD(+). 2 residues coordinate substrate: K233 and D237. Residues N238, 267 to 272 (GYGDVG), E290, N325, 346 to 348 (IGH), and N394 contribute to the NAD(+) site.

This sequence belongs to the adenosylhomocysteinase family. NAD(+) is required as a cofactor.

The protein resides in the cytoplasm. The catalysed reaction is S-adenosyl-L-homocysteine + H2O = L-homocysteine + adenosine. It participates in amino-acid biosynthesis; L-homocysteine biosynthesis; L-homocysteine from S-adenosyl-L-homocysteine: step 1/1. Its function is as follows. May play a key role in the regulation of the intracellular concentration of adenosylhomocysteine. This is Adenosylhomocysteinase from Oleidesulfovibrio alaskensis (strain ATCC BAA-1058 / DSM 17464 / G20) (Desulfovibrio alaskensis).